A 61-amino-acid chain; its full sequence is uncharacterized protein (61 aa).

Residues 10–27 traverse the membrane as a helical segment; it reads RILFFFFIFFTLFLFNIP.

The protein localises to the membrane. This is an uncharacterized protein from Dictyostelium discoideum (Social amoeba).